Here is a 192-residue protein sequence, read N- to C-terminus: uncharacterized protein (192 aa).

Positions 29–160 constitute a Nudix hydrolase domain; it reads HRQAAVLIPI…PLDIYRRGDS (132 aa). Residues 67 to 89 carry the Nudix box motif; sequence GAVDDTDASVIAAALREAEEEVA. Residues glutamate 83 and glutamate 87 each coordinate Mg(2+).

The protein belongs to the Nudix hydrolase family. PCD1 subfamily. It depends on Mn(2+) as a cofactor. The cofactor is Mg(2+).

Probably mediates the hydrolysis of some nucleoside diphosphate derivatives. This is an uncharacterized protein from Shigella flexneri.